We begin with the raw amino-acid sequence, 287 residues long: MSKSDYIQNMFQTKSFVDRYKYTEKLTGLYAQTLVDYSGVANTSQKPLVVLDNACGIGAVSSVLNHTLQDEAKKTWKLTCGDLSEGMLETTKRRLQDEGWVNAETKIVNALDTGLPDGHYTHVFVAFGFQSFPDANAALKECFRILASGGILASSTWQNFNWIPIMKAAIETIPGNLPFPTQKEFIALHNAGWDSESYIQSELEKLGFRDVKVIPVPKETSIPIDEFFEVCMMIIPYLLPKFWTEEQRESHEKDVPMVLRQYLQDTYGANGQVPLEAVALITTGLKP.

S-adenosyl-L-methionine contacts are provided by Thr27 and Ala54. An intrachain disulfide couples Cys55 to Cys80. Positions 82, 87, 109, 110, 126, and 248 each coordinate S-adenosyl-L-methionine.

It belongs to the class I-like SAM-binding methyltransferase superfamily.

It is found in the cytoplasm. The catalysed reaction is a thiol + S-adenosyl-L-methionine = a methyl thioether + S-adenosyl-L-homocysteine + H(+). Its function is as follows. S-methyltransferase that catalyzes the irreversible conversion of the secondary metabolite gliotoxin to bis(methylthio)gliotoxin (BmGT). Gliotoxin, a member of the epipolythiodioxopiperazine (ETP) class of toxins, is characterized by a disulfide bridged cyclic dipeptide. Its thiol groups are essential for bioactivity, as they conjugate to sulfur-containing proteins, disturb the intracellular redox equilibrium, and generate reactive oxygen species by cycling between reduced and oxidized states. The enzyme prevents self-intoxication of the fungus by irreversible conversion of the toxic gliotoxin to a biologically inactive bis-thiomethylated derivative. Appears to negatively regulate gliotoxin biosynthesis. This is Gliotoxin thiomethyltransferase GtmA from Aspergillus fumigatus (strain ATCC MYA-4609 / CBS 101355 / FGSC A1100 / Af293) (Neosartorya fumigata).